The chain runs to 470 residues: Glutamate--tRNA ligase 2 (470 aa).

The 'HIGH' region motif lies at 10 to 20 (PSPTGFLHIGS). The 'KMSKS' region signature appears at 239 to 243 (KLSKR). Lys-242 is a binding site for ATP.

The protein belongs to the class-I aminoacyl-tRNA synthetase family. Glutamate--tRNA ligase type 1 subfamily. In terms of assembly, monomer.

Its subcellular location is the cytoplasm. The catalysed reaction is tRNA(Glu) + L-glutamate + ATP = L-glutamyl-tRNA(Glu) + AMP + diphosphate. Functionally, catalyzes the attachment of glutamate to tRNA(Glu) in a two-step reaction: glutamate is first activated by ATP to form Glu-AMP and then transferred to the acceptor end of tRNA(Glu). The chain is Glutamate--tRNA ligase 2 from Rickettsia prowazekii (strain Madrid E).